A 58-amino-acid chain; its full sequence is Sperm protamine P1 (58 aa).

Residues 1-58 are disordered; it reads MARYRRRSRSRSRSRYGRRRRRSRSRRRRSRRRRRRRGRRGRGYHRRSPHRRRRRRRR.

It belongs to the protamine P1 family. In terms of tissue distribution, testis.

It is found in the nucleus. It localises to the chromosome. Functionally, protamines substitute for histones in the chromatin of sperm during the haploid phase of spermatogenesis. They compact sperm DNA into a highly condensed, stable and inactive complex. The chain is Sperm protamine P1 (PRM1) from Monodelphis domestica (Gray short-tailed opossum).